The chain runs to 256 residues: Indole-3-glycerol phosphate synthase (256 aa).

This sequence belongs to the TrpC family.

The catalysed reaction is 1-(2-carboxyphenylamino)-1-deoxy-D-ribulose 5-phosphate + H(+) = (1S,2R)-1-C-(indol-3-yl)glycerol 3-phosphate + CO2 + H2O. Its pathway is amino-acid biosynthesis; L-tryptophan biosynthesis; L-tryptophan from chorismate: step 4/5. This Caldanaerobacter subterraneus subsp. tengcongensis (strain DSM 15242 / JCM 11007 / NBRC 100824 / MB4) (Thermoanaerobacter tengcongensis) protein is Indole-3-glycerol phosphate synthase.